We begin with the raw amino-acid sequence, 122 residues long: Replication termination protein (122 aa).

Homodimer.

Its function is as follows. Plays a role in DNA replication and termination (fork arrest mechanism). Two dimers of rtp bind to the two inverted repeat regions (IRI and IRII) present in the termination site. The binding of each dimer is centered on an 8 bp direct repeat. The polypeptide is Replication termination protein (rtp) (Bacillus spizizenii (strain ATCC 23059 / NRRL B-14472 / W23) (Bacillus subtilis subsp. spizizenii)).